The primary structure comprises 407 residues: B3 domain-containing protein Os07g0183200 (407 aa).

A DNA-binding region (TF-B3) is located at residues 124-227 (FVKTLMISDF…ELYVGVRRQR (104 aa)).

Its subcellular location is the nucleus. The protein is B3 domain-containing protein Os07g0183200 of Oryza sativa subsp. japonica (Rice).